Reading from the N-terminus, the 537-residue chain is Tyrosine-protein kinase Fyn (537 aa).

Glycine 2 carries N-myristoyl glycine lipidation. 2 S-palmitoyl cysteine lipidation sites follow: cysteine 3 and cysteine 6. A Phosphothreonine; by PKC modification is found at threonine 12. The region spanning 82–143 (TGVTLFVALY…PSNYVAPVDS (62 aa)) is the SH3 domain. An SH2 domain is found at 149–246 (WYFGKLGRKD…GLCCRLVVPC (98 aa)). The region spanning 271–524 (LQLIKRLGNG…YLQGFLEDYF (254 aa)) is the Protein kinase domain. ATP contacts are provided by residues 277–285 (LGNGQFGEV) and lysine 299. The Proton acceptor role is filled by aspartate 390. Residue tyrosine 420 is modified to Phosphotyrosine; by autocatalysis. Residue tyrosine 531 is modified to Phosphotyrosine.

This sequence belongs to the protein kinase superfamily. Tyr protein kinase family. SRC subfamily. In terms of assembly, associates through its SH3 domain, to the p85 subunit of phosphatidylinositol 3-kinase. Requires Mn(2+) as cofactor.

The enzyme catalyses L-tyrosyl-[protein] + ATP = O-phospho-L-tyrosyl-[protein] + ADP + H(+). Inhibited by phosphorylation of Tyr-531 by leukocyte common antigen and activated by dephosphorylation of this site. Its function is as follows. Tyrosine-protein kinase implicated in the control of cell growth. Plays a role in the regulation of intracellular calcium levels. Required in brain development and mature brain function with important roles in the regulation of axon growth, axon guidance, and neurite extension. Blocks axon outgrowth and attraction induced by ntn1 by phosphorylating its receptor ddc. This chain is Tyrosine-protein kinase Fyn (fyn), found in Xenopus laevis (African clawed frog).